Consider the following 334-residue polypeptide: Sucrose operon repressor (334 aa).

The HTH lacI-type domain occupies 6–63 (VTIKDIAELAGVSKATASLVLNGRGKELRVAQETRERVLAIAREQHYQPSIHARSLRD). Residues 8-27 (IKDIAELAGVSKATASLVLN) constitute a DNA-binding region (H-T-H motif).

Repressor for the scr operon. Binds D-fructose as an inducer. The polypeptide is Sucrose operon repressor (scrR) (Klebsiella pneumoniae).